The chain runs to 287 residues: Centromere protein P (287 aa).

The stretch at 1–37 forms a coiled coil; sequence MDNSVYQVYEDEIQLLEEEIKLLSDKYEDIQQESTFF.

It belongs to the CENP-P/CTF19 family. As to quaternary structure, component of the CENPA-HI complex, at least composed of CENPH, CENPI, CENPK, CENPL, CENPM, CENPO and CENPP.

The protein resides in the nucleus. It is found in the chromosome. Its subcellular location is the centromere. Its function is as follows. Component of the CENPA-HI complex, a centromeric complex involved in assembly of kinetochore proteins, mitotic progression and chromosome segregation. The chain is Centromere protein P (CENPP) from Gallus gallus (Chicken).